The following is a 257-amino-acid chain: UPF0246 protein ECA3888 (257 aa).

This sequence belongs to the UPF0246 family.

In Pectobacterium atrosepticum (strain SCRI 1043 / ATCC BAA-672) (Erwinia carotovora subsp. atroseptica), this protein is UPF0246 protein ECA3888.